The following is a 172-amino-acid chain: Protein-export protein SecB (172 aa).

It belongs to the SecB family. In terms of assembly, homotetramer, a dimer of dimers. One homotetramer interacts with 1 SecA dimer.

The protein localises to the cytoplasm. One of the proteins required for the normal export of preproteins out of the cell cytoplasm. It is a molecular chaperone that binds to a subset of precursor proteins, maintaining them in a translocation-competent state. It also specifically binds to its receptor SecA. The protein is Protein-export protein SecB of Bordetella avium (strain 197N).